A 372-amino-acid chain; its full sequence is MALRFEILHQSKKSRARVGRIETAHGYIDTPAFVPVATNGALKGVLDHSNIPLMFCNTYHLIVHPGAEAIAAMGGLHQFIGRNAPIITDSGGFQIFSLAYGSVAEEIKSCGKKKGGNTIIKVNDDGVHFKSYRDGRKLFLSPEISVQAQKDLGADIILPLDELLPFHADPTYFHQSSQRTYVWEKRSLDYHLKNPGIQSMYGVIHGGTFPDQRKLGCKFVEDLPFDGSAIGGSLGKNLQDIVEVVGVTAANLSAERPRHLLGIGDLPSIWATVGFGIDSFDSSYPTKAARHGMILTSQGPLKINNQRYSSDLNPIEPGCSCLACSQGITRAYLRHLFKVHEPNAGIWASIHNMHHMQKVMREIREGILNDRI.

Asp-89 functions as the Proton acceptor in the catalytic mechanism. Substrate is bound by residues 89–93, Asp-161, and Gly-232; that span reads DSGGF. Positions 262 to 268 are RNA binding; the sequence is GIGDLPS. Asp-281 serves as the catalytic Nucleophile. The RNA binding; important for wobble base 34 recognition stretch occupies residues 286–290; sequence TKAAR. The Zn(2+) site is built by Cys-319, Cys-321, Cys-324, and His-351.

This sequence belongs to the queuine tRNA-ribosyltransferase family. Homodimer. Within each dimer, one monomer is responsible for RNA recognition and catalysis, while the other monomer binds to the replacement base PreQ1. Zn(2+) is required as a cofactor.

The catalysed reaction is 7-aminomethyl-7-carbaguanine + guanosine(34) in tRNA = 7-aminomethyl-7-carbaguanosine(34) in tRNA + guanine. The protein operates within tRNA modification; tRNA-queuosine biosynthesis. Catalyzes the base-exchange of a guanine (G) residue with the queuine precursor 7-aminomethyl-7-deazaguanine (PreQ1) at position 34 (anticodon wobble position) in tRNAs with GU(N) anticodons (tRNA-Asp, -Asn, -His and -Tyr). Catalysis occurs through a double-displacement mechanism. The nucleophile active site attacks the C1' of nucleotide 34 to detach the guanine base from the RNA, forming a covalent enzyme-RNA intermediate. The proton acceptor active site deprotonates the incoming PreQ1, allowing a nucleophilic attack on the C1' of the ribose to form the product. After dissociation, two additional enzymatic reactions on the tRNA convert PreQ1 to queuine (Q), resulting in the hypermodified nucleoside queuosine (7-(((4,5-cis-dihydroxy-2-cyclopenten-1-yl)amino)methyl)-7-deazaguanosine). The protein is Queuine tRNA-ribosyltransferase of Chlamydia trachomatis serovar L2 (strain ATCC VR-902B / DSM 19102 / 434/Bu).